A 685-amino-acid polypeptide reads, in one-letter code: Kinesin-like protein KIP2 (685 aa).

Disordered regions lie at residues 11 to 46 and 63 to 101; these read EHVGSAGASLPQTPGSRSFALGAHPGPQKRIGGPAQ and SRPSSPYMQASPLLKGSESGGSAGSPQSPDAPSSASGAS. Low complexity predominate over residues 86-101; it reads GSPQSPDAPSSASGAS. In terms of domain architecture, Kinesin motor spans 113 to 446; the sequence is NVSVAIRIKP…VRFASRAKNI (334 aa). 185 to 192 is a binding site for ATP; the sequence is GMTGSGKT. Coiled-coil stretches lie at residues 464-486 and 520-663; these read IIQNLRKQLDEQHETIVMLRRSA and LEVE…SALS. Residues 485-510 are disordered; it reads SAAAPSGNGSTSPLDSPGVGGTSLSE.

Belongs to the TRAFAC class myosin-kinesin ATPase superfamily. Kinesin family.

It is found in the cytoplasm. Its subcellular location is the cytoskeleton. Its function is as follows. Required for assembly of the mitotic spindle. In Eremothecium gossypii (strain ATCC 10895 / CBS 109.51 / FGSC 9923 / NRRL Y-1056) (Yeast), this protein is Kinesin-like protein KIP2 (KIP2).